The chain runs to 387 residues: Na(+)/H(+) antiporter NhaA (387 aa).

The next 12 helical transmembrane spans lie at 16 to 36 (AGGV…NSSI), 53 to 73 (IEHY…GLEL), 89 to 109 (LLPI…HMFF), 118 to 138 (GSGI…SLLG), 147 to 167 (VFLT…IAIF), 171 to 191 (GIDV…FILN), 197 to 217 (ILWP…HSGV), 220 to 240 (TITG…PDSI), 251 to 271 (PVAF…IIDS), 283 to 303 (IGIF…FCAI), 321 to 341 (VIGV…ITLL), and 354 to 374 (IAIM…LKMT).

Belongs to the NhaA Na(+)/H(+) (TC 2.A.33) antiporter family.

It is found in the cell inner membrane. The catalysed reaction is Na(+)(in) + 2 H(+)(out) = Na(+)(out) + 2 H(+)(in). Na(+)/H(+) antiporter that extrudes sodium in exchange for external protons. The polypeptide is Na(+)/H(+) antiporter NhaA (Cytophaga hutchinsonii (strain ATCC 33406 / DSM 1761 / CIP 103989 / NBRC 15051 / NCIMB 9469 / D465)).